Consider the following 30-residue polypeptide: MKTISRQAYADMFGPTTGDRLRLADTELFL.

Belongs to the metallo-dependent hydrolases superfamily. Urease alpha subunit family. In terms of assembly, heterotrimer of UreA (gamma), UreB (beta) and UreC (alpha) subunits. Three heterotrimers associate to form the active enzyme. Ni cation is required as a cofactor.

It is found in the cytoplasm. The catalysed reaction is urea + 2 H2O + H(+) = hydrogencarbonate + 2 NH4(+). Its pathway is nitrogen metabolism; urea degradation; CO(2) and NH(3) from urea (urease route): step 1/1. This chain is Urease subunit alpha (ureC), found in Escherichia coli.